We begin with the raw amino-acid sequence, 160 residues long: 6,7-dimethyl-8-ribityllumazine synthase (160 aa).

5-amino-6-(D-ribitylamino)uracil is bound by residues F23, 61–63 (SFE), and 85–87 (AVI). Residue 90-91 (DT) coordinates (2S)-2-hydroxy-3-oxobutyl phosphate. Catalysis depends on H93, which acts as the Proton donor. F118 contacts 5-amino-6-(D-ribitylamino)uracil. Residue R132 coordinates (2S)-2-hydroxy-3-oxobutyl phosphate.

It belongs to the DMRL synthase family.

It catalyses the reaction (2S)-2-hydroxy-3-oxobutyl phosphate + 5-amino-6-(D-ribitylamino)uracil = 6,7-dimethyl-8-(1-D-ribityl)lumazine + phosphate + 2 H2O + H(+). It functions in the pathway cofactor biosynthesis; riboflavin biosynthesis; riboflavin from 2-hydroxy-3-oxobutyl phosphate and 5-amino-6-(D-ribitylamino)uracil: step 1/2. Functionally, catalyzes the formation of 6,7-dimethyl-8-ribityllumazine by condensation of 5-amino-6-(D-ribitylamino)uracil with 3,4-dihydroxy-2-butanone 4-phosphate. This is the penultimate step in the biosynthesis of riboflavin. The protein is 6,7-dimethyl-8-ribityllumazine synthase of Synechococcus sp. (strain CC9605).